Reading from the N-terminus, the 1012-residue chain is PHD finger protein 20 (1012 aa).

2 Tudor domains span residues 4-69 and 83-147; these read HPPN…RPLE and GSSE…GNAR. Positions 142 to 336 are disordered; the sequence is IVGNARPKET…RSSRLSTNGT (195 aa). A compositionally biased stretch (basic and acidic residues) spans 147-245; that stretch reads RPKETDHKSL…QVDKKPENDI (99 aa). Residue Ser-159 is modified to Phosphoserine. Positions 257–269 form a DNA-binding region, a.T hook; that stretch reads KRKRGRPPSIAPT. A compositionally biased stretch (polar residues) spans 271–280; sequence VDSNSQTLQP. A compositionally biased stretch (basic and acidic residues) spans 297-325; sequence PLKRPRLDKNSSQEKSKNYSENTDKDLSR. The C2H2-type zinc finger occupies 452–477; sequence FRCKVVDCLKFFRKAKLLHYHMKYFH. Over residues 481-490 the composition is skewed to basic and acidic residues; sequence KSLEPEESPG. Residues 481-611 form a disordered region; it reads KSLEPEESPG…KGKVKALEED (131 aa). Position 488 is a phosphoserine (Ser-488). The segment covering 497-509 has biased composition (polar residues); the sequence is RGPSASDKPSQET. The span at 522–538 shows a compositional bias: basic and acidic residues; sequence TKDKEKNKEKKFKEFVR. The span at 539–551 shows a compositional bias: basic residues; that stretch reads VKPKKKKKKKKKT. The PHD-type zinc finger occupies 654–700; the sequence is RCICEVQEENDFMIQCEECQCWQHGVCMGLLEENVPEKYTCYVCQDP. Lys-843 bears the N6-acetyllysine mark. Residues 866 to 912 form a disordered region; the sequence is DAVNPLHENGDDSLSPRLGWPLDQDRSKGDSDPKPGSPKVKEYVSKK. Phosphoserine occurs at positions 878 and 880. Over residues 888–912 the composition is skewed to basic and acidic residues; that stretch reads DQDRSKGDSDPKPGSPKVKEYVSKK.

In terms of assembly, homodimer; disulfide-linked. Component of some MLL1/MLL complex, at least composed of the core components KMT2A/MLL1, ASH2L, HCFC1, WDR5 and RBBP5, as well as the facultative components BACC1, CHD8, E2F6, HSP70, INO80C, KANSL1, LAS1L, MAX, MCRS1, MGA, KAT8/MOF, PELP1, PHF20, PRP31, RING2, RUVB1/TIP49A, RUVB2/TIP49B, SENP3, TAF1, TAF4, TAF6, TAF7, TAF9 and TEX10. Component of the NSL complex at least composed of MOF/KAT8, KANSL1, KANSL2, KANSL3, MCRS1, PHF20, OGT1/OGT, WDR5 and HCFC1. In terms of processing, ubiquitinated by TRIM26; leading to proteasomal degradation. Expressed in heart, kidney, liver, lung, pancreas, placenta, spleen and testis. Not expressed in brain, skeletal muscle, colon, ovary, prostate, small intestine and thymus. Expressed in colon and ovary cancer cell lines while it is not expressed in the respective normal tissues.

It localises to the nucleus. Functionally, methyllysine-binding protein, component of the MOF histone acetyltransferase protein complex. Not required for maintaining the global histone H4 'Lys-16' acetylation (H4K16ac) levels or locus specific histone acetylation, but instead works downstream in transcriptional regulation of MOF target genes. As part of the NSL complex it may be involved in acetylation of nucleosomal histone H4 on several lysine residues. Contributes to methyllysine-dependent p53/TP53 stabilization and up-regulation after DNA damage. This is PHD finger protein 20 (PHF20) from Homo sapiens (Human).